The sequence spans 527 residues: MSYPLEEVNKRRTFAIISHPDAGKTTITEKVLLYGNAIQTAGSVKGKGSAAHAKSDWMEMEKQRGISITTSVMQFPYNNCLVNLLDTPGHEDFSEDTYRTLTAVDSCLMVIDSAKGVEERTIKLMEVTRLRDTPIITFMNKLDRDIRDPMELLDEVENVLKIRCAPITWPIGCGKLFKGVYHLAKNETYLYQSGQGSTIQAVRVVKGLNNPELDVAVGDDLAQQLRDELELVQGASNEFEQDAFIKGELTPVFFGTALGNFGVDHFLDGLTQWAPKPQSRQADTRTVESAEEKFSGFVFKIQANMDPKHRDRVAFMRVVSGKYEKGMKLKHVRIGKDVVISDALTFMAGDRAHAEEAYAGDIIGLHNHGTIQIGDTFTQGETLKFTGIPNFAPELFRRIRLKDPLKQKQLLKGLVQLSEEGAVQVFRPLLNNDLIVGAVGVLQFDVVVLRLKTEYNVEAIYENVNVATARWVECADGKKFEEFKRKNEQNLALDGGDNLTYIAPTMVNLNLAQERYPDVVFYKTREH.

In terms of domain architecture, tr-type G spans 9-278 (NKRRTFAIIS…GLTQWAPKPQ (270 aa)). GTP-binding positions include 18–25 (SHPDAGKT), 86–90 (DTPGH), and 140–143 (NKLD).

The protein belongs to the TRAFAC class translation factor GTPase superfamily. Classic translation factor GTPase family. PrfC subfamily.

It localises to the cytoplasm. Increases the formation of ribosomal termination complexes and stimulates activities of RF-1 and RF-2. It binds guanine nucleotides and has strong preference for UGA stop codons. It may interact directly with the ribosome. The stimulation of RF-1 and RF-2 is significantly reduced by GTP and GDP, but not by GMP. This Haemophilus influenzae (strain PittEE) protein is Peptide chain release factor 3.